The primary structure comprises 279 residues: MYDLTGKHVCYVADCGGIALETSKVLMTKNIAKLAILQSVENQPAIARLQSIKHSTQIFFWTFDVTMARQEMKKYFDEVMVQMDYIDVLINGATLCDERNIDATINTNLTGMMNTVATVLPYMDRKMGGAGGLVVNVTSVIGLDPSPVFCAYSASKFGVIGFTRSLADPLYYTQNGVAVMAVCCGPTKVFVDRELNAFLEYGQTFADRLRRAPCQSTAVCGLNIVTAIERSENGQIWIADKGGLELVTLHWYWHMADQFLSYMQSTDDENQEQFVSGQR.

11 to 34 (YVADCGGIALETSKVLMTKNIAKL) provides a ligand contact to NAD(+). Ser139 is a substrate binding site. Tyr152 serves as the catalytic Proton acceptor.

Belongs to the short-chain dehydrogenases/reductases (SDR) family.

This Drosophila madeirensis (Fruit fly) protein is Alcohol dehydrogenase-related 31 kDa protein (Adhr).